A 406-amino-acid chain; its full sequence is Probable delta-aminolevulinic acid dehydratase 2, chloroplastic (406 aa).

The transit peptide at 1 to 34 directs the protein to the chloroplast; that stretch reads MTSSMFRSPCKIPSVKGFEQKSYVGLKAASYNVR. Lys275 acts as the Schiff-base intermediate with substrate in catalysis. 5-aminolevulinate is bound by residues Arg285 and Lys291. Glu307 serves as a coordination point for Mg(2+). Lys322 (schiff-base intermediate with substrate) is an active-site residue. The 5-aminolevulinate site is built by Ser348 and Tyr387.

The protein belongs to the ALAD family. Homooctamer. Mg(2+) serves as cofactor.

Its subcellular location is the plastid. The protein resides in the chloroplast. It catalyses the reaction 2 5-aminolevulinate = porphobilinogen + 2 H2O + H(+). It participates in porphyrin-containing compound metabolism; protoporphyrin-IX biosynthesis; coproporphyrinogen-III from 5-aminolevulinate: step 1/4. Its pathway is porphyrin-containing compound metabolism; chlorophyll biosynthesis. Its function is as follows. Catalyzes an early step in the biosynthesis of tetrapyrroles. Binds two molecules of 5-aminolevulinate per subunit, each at a distinct site, and catalyzes their condensation to form porphobilinogen. This chain is Probable delta-aminolevulinic acid dehydratase 2, chloroplastic (HEMB2), found in Arabidopsis thaliana (Mouse-ear cress).